We begin with the raw amino-acid sequence, 103 residues long: MYAIIKTGGKQYKVAEGDSVFVEKLDAAEGSEVTFDEVILVANGDDVKVGTPLVDGAKVTAKVEKQGKEKKVVTFKYKPKKHSHSKYGHRQPYTKVTVEKIEA.

It belongs to the bacterial ribosomal protein bL21 family. As to quaternary structure, part of the 50S ribosomal subunit. Contacts protein L20.

This protein binds to 23S rRNA in the presence of protein L20. In Lactobacillus acidophilus (strain ATCC 700396 / NCK56 / N2 / NCFM), this protein is Large ribosomal subunit protein bL21.